The primary structure comprises 269 residues: Gem-associated protein 2 (269 aa).

2 positions are modified to phosphoserine: Ser-70 and Ser-155.

The protein belongs to the gemin-2 family. In terms of assembly, monomer. Part of the core SMN complex that contains SMN1, GEMIN2/SIP1, DDX20/GEMIN3, GEMIN4, GEMIN5, GEMIN6, GEMIN7, GEMIN8 and STRAP/UNRIP. Part of the SMN-Sm complex that contains SMN1, GEMIN2/SIP1, DDX20/GEMIN3, GEMIN4, GEMIN5, GEMIN6, GEMIN7, GEMIN8, STRAP/UNRIP and the Sm proteins SNRPB, SNRPD1, SNRPD2, SNRPD3, SNRPE, SNRPF and SNRPG. Interacts with GEMIN5; the interaction is direct. Interacts (via C-terminus) with SMN1; the interaction is direct. Interacts with SNRPD1; the interaction is direct. Interacts with SNRPD2; the interaction is direct. Interacts (via N-terminus) with SNRPF; the interaction is direct. Interacts (via N-terminus) with SNRPE; the interaction is direct. Interacts (via N-terminus) with SNRPG; the interaction is direct.

It localises to the nucleus. The protein resides in the gem. Its subcellular location is the cytoplasm. In terms of biological role, the SMN complex catalyzes the assembly of small nuclear ribonucleoproteins (snRNPs), the building blocks of the spliceosome, and thereby plays an important role in the splicing of cellular pre-mRNAs. Most spliceosomal snRNPs contain a common set of Sm proteins SNRPB, SNRPD1, SNRPD2, SNRPD3, SNRPE, SNRPF and SNRPG that assemble in a heptameric protein ring on the Sm site of the small nuclear RNA to form the core snRNP (Sm core). In the cytosol, the Sm proteins SNRPD1, SNRPD2, SNRPE, SNRPF and SNRPG (5Sm) are trapped in an inactive 6S pICln-Sm complex by the chaperone CLNS1A that controls the assembly of the core snRNP. To assemble core snRNPs, the SMN complex accepts the trapped 5Sm proteins from CLNS1A. Binding of snRNA inside 5Sm ultimately triggers eviction of the SMN complex, thereby allowing binding of SNRPD3 and SNRPB to complete assembly of the core snRNP. Within the SMN complex, GEMIN2 constrains the conformation of 5Sm, thereby promoting 5Sm binding to snRNA containing the snRNP code (a nonameric Sm site and a 3'-adjacent stem-loop), thus preventing progression of assembly until a cognate substrate is bound. This chain is Gem-associated protein 2, found in Mus musculus (Mouse).